A 329-amino-acid polypeptide reads, in one-letter code: GMP reductase (329 aa).

Cysteine 178 functions as the Thioimidate intermediate in the catalytic mechanism. Isoleucine 207–cysteine 230 lines the NADP(+) pocket.

It belongs to the IMPDH/GMPR family. GuaC type 2 subfamily.

It catalyses the reaction IMP + NH4(+) + NADP(+) = GMP + NADPH + 2 H(+). Catalyzes the irreversible NADPH-dependent deamination of GMP to IMP. It functions in the conversion of nucleobase, nucleoside and nucleotide derivatives of G to A nucleotides, and in maintaining the intracellular balance of A and G nucleotides. This chain is GMP reductase, found in Lacticaseibacillus casei (strain BL23) (Lactobacillus casei).